The sequence spans 181 residues: DNA-packaging protein NU1 homolog (181 aa).

To phage lambda DNA packaging protein NU1.

The protein is DNA-packaging protein NU1 homolog (nohD) of Escherichia coli (strain K12).